The primary structure comprises 5911 residues: MVPEKPTAQSKSGIGEPFRAGDAAGLHIPTSEINSTYLDDTFPSLFSTMHQFRENDAVKAYPSGGIEKFGDIRATVQPVSSGSSDTSSSDDSQQLQHAVEYWKDILADGKFVSYPSPPASTQQRSSLSGLAPHAVEQLQLPLPKHSKVPPATLMRAAWALVAGRMTDSESIVFGTNVLDEPILSAVPFRAHIHGHTVSSFIESVQKQEEEVMASPHQLTLLFSGMEQASTLFQTLLLIPSDEEYSNSPQDSGCRTPEPCGFGLVLEIAHTQDRASLKVTARYRSDTLQAFEVKRLLHRFASVMAQLDTVKPDQSVDEIDFMTEQDFQDIWAWNSKAPAAINGFIHDIVKEKALIQPSSTAVYAWDGEFTYAEIDRHSNRLAVTLITGYGVQPGTPIALCFEKSKWMAVSMLGVLKAGAYFVMLDAASAPEQRLRTMVEQVQARLVISSPLNQALSSRICAAVVTLDSQTLRECKYNDDEIDRLLHQQLLTSSSNALAHVIFTSGSTGTPKAIPTTHQSIRSALHHQVAAIHLNTKSRVYDFSSYSFDAAIFNIWATFYAGGCLCVPSEADRKDDLVGSFQRLGANHVIMTPSAAQLLASAPEKVPQLETIMLVGERLTIQDVLPWWNRVCLINSYGPCECTPLGTSNLNPSSPTDLLDIGVGLGQVTWIVDPDDHNRLVPPGLIGELVLEGPSVSQGYLNDPERTAAAFVKDPAWLVERGRHGKVYKTGDLVQYSNEQGRLKYIGRKDAQVKIRGQRVELGEVEHRVQQCMPDVSQVVVEMITPKSGNNLSSAMLAAFLVPSRGSGKEVSEPRMAQSIPQIYAVSEEVQSALSKALPSYMVPSVFFSVRDLPKAASSGKLDRKKIREMGSSFSVKQLADLRTNAQGPKRQPRPFSVEYSLQGIWASVLNMERSDIGLNDSFFQLGGDSISAMKVVRDAREQLEVELSVADILQHPRLSEAAAIVARGTKLFKSDEVPAAFSLLPGNNAREAIDPALKSHGVQSLSVEDAFPCTPLQEGLVFLSLKSPGDYIMQTTLDLSTSSYSNAHKFRQAWEHVVAEHPALRTRFVHSDGETGLAQVVLRPEAFAWNEVANSSLNEYLETDRRQPMSLGQAFARCALVHDKGAPRWFVWTMHHALYDGWSIRLIMNAFQRAYRSLEAGSNLVTGTTNASYPAFIKYILSQSVSADGSMAKYWKKTLSDCEAAQFPAVPLHVQNQAPDHDKINTLFQDLPSMTKKQGISNATPSTLIRAAWALVVRSMTNSDDVVFGVTVSGRSAPVAAIDEVPGPTMATVPFRSILAKNMLVGDYLRSVQQQAIDMIPFEQIGLPRIAKLSADCEHACRFQTLLVVQPEETADILSEFDDEHGGPERWFNNTYALLLEVQLGDKKANSSGAVKARFDSRIIQANTVKSLLERLIFVIDQLSGADNMARVLSDIDVVTPVDLEQIWQWNKTVPATIDRNVHDMILERALSQPDRPVVLAWDGELTYGELTRLSSTLARRLIDQYGVRPGDIVGLCFEKSKWTSVAILAVLQAGAGFAMLDPFLPETRLQTIVDQVNALVVVSSPKQRDLSLQLGCDQVLHLASDLFSEPETALVNVKTDPSSPVYIIFTSGSTGTPKGSIISHRSLASSLVHQREGCGFSQSSRVYDFSSYGFDAPLFLAFQTFSAGGCLCVPSDEDRKSRLAESLRELKATFALIPPSASQLVSPEQVPDLKTLIVGGEASTVKDLERWSSADLMLINAYGPCECTAVSMINPTHTSNMSVRKALAIGKGLGQVTWVVDPQDHSRLVSPGAVGELLLEGPYIGQGYLNNEEKTREAYVKDPAWLLQGTGKVPGRRGRLYKTGDLVQYSEDGDGSLMFVGRKADDAQVKIRGQRAELGEIELRVQQALKYDKTVQEVVVDVIVPHGEGSRPMLVAFLKTTDVKDTSATPDLYRVSSAFEDELAQSLPSYMIPEAFFKLAGIPQTATGKLHRMRLRAMGASYSLRQLADLRTEATQGPKPQPTSELEAEMQQIWARVLSFEPERIGLDDSFFRLGGDSIAAMKAVGEATKASIRVTVADFFEHRTLRNICSHSYYCSEMAAESLSIAVESFSLLAPDSIETREKLVQGLAAQLRTTTSRIQDAYPCTPLQEGLVSLASKRTGDYIMQQVLELSPDMLNNIDTFKDAWQKAVHAVPVLRTRIVQHEKLGLLQVLLNHQDEGIEWTEAMGLDWYLKSDRQKPMGLGQPLARYALVRDRTGRPKWFVWTVHHALYDGLSLPMILEEVDRTMQGQSVEQARPQAQAFIKYIQQHDSNELKSYWQATLGDSGECVSYPSLPSGLERPIMSNNLIEHQIPRAWVSSSSNETTVSTMLRAAWGLVTSQMTGSDDVVFGATVSGRNAPVVGVESMAFPTIATVPLRLKLNRKDQRVVDYLDQVQRQATEMIPYEQAGLQRIAQLVSPGARQACAFQTLLVVQPKSKTESTKTSQLGEWTTPDQTEWFTTYPLTIEATVSLSQIDVDARFDSRVVEPWMVKGLLERLDFVMQQLGQAGPDINMSDIGIMTPGGLQQIWKWNEKVPDPVDRSIHSVIEEQARLRPEAAAICAWDGNLTYAELNSFSSRLAFYLIALTGGKSLKETFVPLCFDKSMWTPVAMLGVLKTGAGFVLLDSALPEQRLRHIVEKVGAGQLMLSSDSCSSLSGRISQGVVTINSDFFKLAAQTIARLPVASADSAAYVIFTSGSTGTPKGVVITHRNLASALPYHVKRLGYTPDSRVYEFASYSFGASLNNMFTALTTGSCLCIPSDHERRSQLDRSLVSMNATHVLLTPSVAESLAPRSVSGLKSIIFGGEAVRSQDVGPWWEAGIKVCTAYGSSECTTISTINDTASTPDEATRIGWGVGLVPWVVDPSDHEKLLPPGCIGELLLEGPAVGRGYLSDPEKTAEVFIQSPSWLTRGIPAANNDNHSQKGRSGRLYKTGDLVRYNEDGSLSFFGRKDSQVKIRGQRVELGEVEHRVKERVSEAAQVVVEAIIPTGSDSAHQTLAAFLVMKEETERPASDDDKPTIIPISAGVEDMLSQNLPVYMVPTVFFSMKKLPMTATGKMNRRVLRQIGSSFSAKQFAAARKTREQGTPSQEQPSTNAQRELQQIWSRILDLPTDLIGLDDGFFSLGGDSVSAMKVVGEARKAGIELAVADIFTHRTLRLIADNSKSIKREGDQTVANIIPPFSLIGNEVDIEALRQNISTQCDIDTSKVQDAYPCTPLQEGLISLASKRPGDYVMQAVLELSSEVSITKFQAAWEETTKTIDVLRTRIVHCQGYEKLGLLQVILDSSVNWINATGLESYLQADRKQVMGLNDPLARYALVYDGQTDRPRWFVWTVHHAIYDGWSLPLVLDTVAKAYQGETNAGSQSLTGASGFQPFIKYLEEQQRNPEGVKKTEDYWKRYFDSCEATQFPTLPSPSYEPTSNKTTLYRMKVNSPSSSTSLNLTPSTIIRAAWALVVGQMTNTSDVVFGTTVSGRNAPVQTIEMMPAPTLATVPLRVKWTSGQAILGYLETVQREATEMIAFEQTGLHRIAKMSSDARQACQFQTLLVIQSQGHDEDESTGSLVQNELGSSPFGEWVNQDQNEWFNPYALMIEAQPGSQGDSFTLTANYDEKTIQEWIVLKLLKRLELVIQAFMAESYGQGQMVSKTIDELGGSIMTEDDLEQIWTWNQSTPEAVDKYVHEMVEERVREQPNAPAVHAWDGRLTYKELDQLAEKMAAQLLSSIDTGARLSSPRVIPLCFTKSMWTSVAMYGVLKAGGAFVLLDPMVPEQRLKTIVEQVGADVVLSSESEADLAKRLCPHVIQVGLSLSTGPSPTTQRLKGSQRHLSPHAPMFAVFTSGSTGVPKGVLLSHRNFASEIKHHSHLLGFHKNSRVFDFASHAFDAAVHNVFATFANGACLCVPSEKDRKNNIGGVMASMRVTVADLTPTVARLLDPTTLPDIETMILAGEAVSAEDAARWWRDSTRVVNGYGPSECTVMSTINAYPTSPEDASSIGLGAGHTTWVVDPNNHNILVAPGCIGELLLEGPLVGQGYLNDPAKTAASFIEDPTWLLKGSSTRPGRRGRLYKSGDLVKYREDGRFWFMGRKDSQVKIRGQRIELEEVERQVQASWSGDDISQIAAEVIKPQGQGSKPMLAAFIVSKDHQLSDDGPPEKAVKPVPVDPEIEARLAERLPAAMVPSVFFFYMRSHLPQTATGKTHRKLLREIGSSFSFQHLAEVANQVQDDENETKARRPPTTPLECQMQAIWVRILGISPDRISLDDSFIRLGGDSIAAMKVVGEARKHGSLDITVADLLRRPKLCDIIATMTKNKATGASRRLPRDDDEPIPHTKYAGPVDQSYAQGRLWFLDRLYPGLTWCLMPFTARFRGILRLDALHIALQAVENRHEALRTTFMSRDNVDLQEIHPFIPRELKLVELPRGAKGEESLQRALFKERTTPLDLSTETGWRVTVYRLGPEEENHHVLSILMHHIISDGWSLNVLRRELDIFYAAAVNSLDPLSQIDPLPIQYRDYASWQKQRFHQDEYQRQLDYWVSQLQTSRPAEFLCDKPRPDTLSGGAGVHEFTIANTMYDRLQKFCAEAEVTPFVVLLAAFRATHFRLTGVDDATIGTANANRDRWEVKELIGFFVNLQCLRIKMEQGVSFEDLVQQVQETAAASFDNQHVPFEKIVSQLNTPRDLSRHPLVQVIFALHSRGTSGPVKLGDDLESEMLDPIPTSQFDLEFHVFDDGDCLTANVVYSQDLFETETINSMVSVFNNLLDRALSEPKTAISSLPLLTEDGRLKLETWGLTKIDRTNYPRDSSIVDLFKEQVSRHPNRVAVKGNSSSQLTYAELDRKSDTLARWLLKQQPEFAPESMIGVMAHRSCEEIIALFGILKANMAHLPLNHNTPTGRVETILSAIQGPKRLLLLGQDVAPPAVNLDNIEMVRIADTLEEEAPRSWWKRAVVQALPRPKPTSLAYVLFTSGSTGKPKGVMVEHRGVSRLCRDNNIIRHLPSSGGFGHFLNISFDGSSLEVYFAILNGLTLVCVDEITILDAIALQGVFERENVRAVLFTPALLKQILRVNPTTLGTLDLLCVGGDRLDPADCVKAYKHTAQGAKVLNLYGPTENSVVSTVFCYEGQDEGFATGTAPIGEPISNSGALVMDSQQRLVPLGVIGEIVVTGDGVARGYTDPSRDVDRFIRLDGGKGERAYRTGDYARWRPVDGKIEFMGRMDVQVKIRGHRVELGEIEHAIRGHEAVHDVVVLAYRDEKDGGEPRLVGFVTLHDTSKEDVEVKEVEHKDGEGETKQHVHQELEARLRANLPTYMIPQTITILERMPLNASGKVDRVALSLTITPKTKARAAGVALRKPTTDMEVALRKIWAQVLDLDPETIGLDDNFFDIGGHSILAMRAVSEARKVDIELTVADIFRSKCLEALARRQEEIVGGPNTEEEEEVELIDSNTKAALLKDLDSLKATIHSTQVEDMLPLTSMQEHYVTTGVASGEYAHYFYLDLGANPDVSRIEKACRLTLAKIPILRASFMRLLGQHWQVIPRDVPARLQTVNTIHVNGDLDRAADDFCLRNWDNISAAEPPALFTLLKHRTQGTRLVIRLSHAQYDGVCFPPIVRAIIEGYTTGDVTPLPSFTKFLSGAARQRPQSLEYWSRLLRGSSLTTILPRLRLSNSSRALTPPRPIAAELDVALPQRLPSSITPAIVASAAWSILLSQISGKQDVVFGHVVAGRNSSISRIDEIVGPCLNLVPVRATLTESLTATELLQSLQTQFFTMGSADSVGFKDIMHESSNWPSNSDFESVLHHANVDEHPEFDFDGIKMKLHFFTNPRLIVSRLALASYPTKGGECLQFRLTASTDKLSDVQAKMLLDALCKIIRGFGESANVPVLSWIGQVGLRLSFTLMDYSSFPL.

The tract at residues Met-1–Asp-22 is disordered. An adenylation 1 region spans residues Ala-352–Arg-754. Residues Pro-891 to Thr-968 enclose the Carrier 1 domain. The residue at position 928 (Ser-928) is an O-(pantetheine 4'-phosphoryl)serine. Positions Glu-1007–Leu-1422 are condensation 1. The interval Glu-1467 to Asp-1865 is adenylation 2. Positions Gln-2001–Ser-2077 constitute a Carrier 2 domain. Position 2038 is an O-(pantetheine 4'-phosphoryl)serine (Ser-2038). Residues Gln-2121–Gly-2538 form a condensation 2 region. The adenylation 3 stretch occupies residues Glu-2568–Arg-2977. In terms of domain architecture, Carrier 3 spans Gln-3110–Lys-3186. Residue Ser-3147 is modified to O-(pantetheine 4'-phosphoryl)serine. The interval Val-3227–Ala-3652 is condensation 3. The tract at residues Glu-3701 to Arg-4108 is adenylation 4. In terms of domain architecture, Carrier 4 spans Pro-4248 to Lys-4325. Ser-4285 carries the post-translational modification O-(pantetheine 4'-phosphoryl)serine. A disordered region spans residues Ala-4326–Ala-4347. A condensation 4 region spans residues Ser-4353–Arg-4793. Residues Phe-4819–Arg-5231 are adenylation 5. Residues Lys-5360 to Val-5436 form the Carrier 5 domain. An O-(pantetheine 4'-phosphoryl)serine modification is found at Ser-5397. The interval Val-5474 to Thr-5828 is condensation 5.

The protein belongs to the NRP synthetase family.

It functions in the pathway secondary metabolite biosynthesis. Its function is as follows. Nonribosomal peptide synthetase; part of the gene cluster that mediates the biosynthesis of sansalvamide, a cyclic pentadepsipeptide that shows promising results as potential anti-cancer drug. The nonribosmal peptide synthetase NRPS30 produces sansalvamide by incorporating successively one phenylalanine, one leucine, one alpha-hydroxyisocaproic acid (HICA), one valine and one leucine before sansalvamide is released from by cyclization by the terminal C domain of NRPS30. The HICA residue is probably provided by reduction of alpha-ketoisocaproate by the cluster-specific aldo-keto reductase (NECHADRAFT_45914). This chain is Nonribosomal peptide synthetase 30, found in Fusarium vanettenii (strain ATCC MYA-4622 / CBS 123669 / FGSC 9596 / NRRL 45880 / 77-13-4) (Fusarium solani subsp. pisi).